A 340-amino-acid polypeptide reads, in one-letter code: DNA polymerase III subunit delta' (340 aa).

The DNA polymerase holoenzyme is a complex that contains 10 different types of subunits. These subunits are organized into 3 functionally essential subassemblies: the pol III core, the beta sliding clamp processivity factor and the clamp-loading complex. The pol III core (subunits alpha,epsilon and theta) contains the polymerase and the 3'-5' exonuclease proofreading activities. The polymerase is tethered to the template via the sliding clamp processivity factor. The clamp-loading complex assembles the beta processivity factor onto the primer template and plays a central role in the organization and communication at the replication fork. This complex contains delta, delta', psi and chi, and copies of either or both of two different DnaX proteins, gamma and tau. The composition of the holoenzyme is, therefore: (alpha,epsilon,theta)[2]-(gamma/tau)[3]-delta,delta', psi,chi-beta[4].

The enzyme catalyses DNA(n) + a 2'-deoxyribonucleoside 5'-triphosphate = DNA(n+1) + diphosphate. DNA polymerase III is a complex, multichain enzyme responsible for most of the replicative synthesis in bacteria. This DNA polymerase also exhibits 3' to 5' exonuclease activity. The sequence is that of DNA polymerase III subunit delta' (holB) from Yersinia pestis.